We begin with the raw amino-acid sequence, 131 residues long: Glycine cleavage system H protein (131 aa).

The Lipoyl-binding domain occupies 24-106 (VYCVGITEHA…YTDGWLFKIK (83 aa)). N6-lipoyllysine is present on Lys65.

The protein belongs to the GcvH family. The glycine cleavage system is composed of four proteins: P, T, L and H. The cofactor is (R)-lipoate.

The glycine cleavage system catalyzes the degradation of glycine. The H protein shuttles the methylamine group of glycine from the P protein to the T protein. The sequence is that of Glycine cleavage system H protein from Sodalis glossinidius (strain morsitans).